The following is a 604-amino-acid chain: Zinc finger protein chinmo (604 aa).

The BTB domain occupies 32–98; that stretch reads ADVILSCDGV…MYKGEVHVSQ (67 aa). 4 disordered regions span residues 122–155, 291–310, 330–437, and 450–470; these read RLAA…SGGS, CDSL…GYTH, RSPY…DEST, and NLKY…TPNT. Low complexity predominate over residues 364–374; the sequence is PSSSASSTAPT. Polar residues predominate over residues 384–409; the sequence is ASPQSSRYENHSPSTTAGNGNATSSL. A compositionally biased stretch (acidic residues) spans 425-437; sequence ANDDDRELMDEST. Positions 461-470 are enriched in low complexity; sequence SNTSSTTPNT. 2 consecutive C2H2-type zinc fingers follow at residues 517-540 and 545-568; these read LKCL…RQRH and VPCP…AREH.

Broadly expressed in the developing larval central nervous system (at protein level). Expressed in the larval lymph gland and circulating hemocytes (at protein level). Expressed in all cell types of the adult testis stem cell niche but not detected in somatic cells of the adult ovary (at protein level). In the testis, expressed at high levels in cyst stem cells and early cyst cells and, at lower levels, in germline stem cells (at protein level).

It is found in the nucleus. Required for morphological differentiation of postmitotic neurons during postembryonic brain development. Ensures production of appropriate neuron subtypes within a lineage by preventing precocious generation of late neuronal types of that lineage. Acts as a downstream mediator of the transcriptional activator Stat92e and is required for the development of the eye-antennal disk which gives rise to the adult eye, antenna and head capsule, for transcriptional repression of the Notch receptor ligand Ser and for the self-renewal of cyst stem cells in the testis. In the adult testis, maintains the male identify of adult somatic cyst stem cells. Represses expression and alternative splicing of transformer pre-mRNA, resulting in the production of the male-specific isoform of transcription factor dsx which ensures male-specific transcription of target genes. Plays a role in actin nuclear localization through its involvement in repressing the expression of the kinase Cdi. This maintains the cofilin/actin-depolymerizing factor homolog tsr in its unphosphorylated state which is required for actin nuclear import. In Drosophila melanogaster (Fruit fly), this protein is Zinc finger protein chinmo.